Consider the following 107-residue polypeptide: L-amino-acid oxidase (107 aa).

FAD is bound at residue 35-38; the sequence is GPMR. Positions 38 and 49 each coordinate substrate.

The protein belongs to the flavin monoamine oxidase family. FIG1 subfamily. Homodimer; non-covalently linked. FAD is required as a cofactor. In terms of processing, N-glycosylated. In terms of tissue distribution, expressed by the venom gland.

The protein localises to the secreted. It catalyses the reaction an L-alpha-amino acid + O2 + H2O = a 2-oxocarboxylate + H2O2 + NH4(+). The catalysed reaction is L-leucine + O2 + H2O = 4-methyl-2-oxopentanoate + H2O2 + NH4(+). The enzyme catalyses L-phenylalanine + O2 + H2O = 3-phenylpyruvate + H2O2 + NH4(+). It carries out the reaction L-tryptophan + O2 + H2O = indole-3-pyruvate + H2O2 + NH4(+). It catalyses the reaction L-methionine + O2 + H2O = 4-methylsulfanyl-2-oxobutanoate + H2O2 + NH4(+). The catalysed reaction is L-isoleucine + O2 + H2O = (S)-3-methyl-2-oxopentanoate + H2O2 + NH4(+). The enzyme catalyses L-arginine + O2 + H2O = 5-guanidino-2-oxopentanoate + H2O2 + NH4(+). It carries out the reaction L-histidine + O2 + H2O = 3-(imidazol-5-yl)pyruvate + H2O2 + NH4(+). Catalyzes an oxidative deamination of predominantly hydrophobic and aromatic L-amino acids, thus producing hydrogen peroxide that may contribute to the diverse toxic effects of this enzyme. Shows high activity on L-Met, moderate activity on L-Trp, L-Leu, L-His, L-Phe, L-Arg, L-Ile, low activity on L-Val, L-Glu, L-Lys, L-Gln, L-Asn, L-Tyr, L-Ala, and no activity on L-Asp, L-Ser, L-Pro, L-Gly, L-Thr and L-Cys. Shows antimicrobial activity inhibiting the growth of both Gram-negative and Gram-positive bacteria. Also inhibits platelet aggregation induced by ADP or collagen. Effects of snake L-amino oxidases on platelets are controversial, since they either induce aggregation or inhibit agonist-induced aggregation. These different effects are probably due to different experimental conditions. This protein may also induce hemorrhage, hemolysis, edema, apoptosis, and have antiparasitic activities. This Macrovipera lebetinus (Levantine viper) protein is L-amino-acid oxidase.